Consider the following 1997-residue polypeptide: Chromatin-remodeling ATPase INO80 (1997 aa).

3 disordered regions span residues 1–378, 397–579, and 674–858; these read MDHF…AAPS, IAAP…AENE, and ERKK…EKVV. Over residues 12 to 25 the composition is skewed to basic and acidic residues; that stretch reads PHFDEDGTEGRGDR. The segment covering 32 to 41 has biased composition (pro residues); the sequence is GPAPPPPPPR. Residues 49–64 show a composition bias toward low complexity; sequence NPVSSNSAVQSQAAAA. Residues 89 to 107 are compositionally biased toward polar residues; the sequence is STNSMRATPHSSSSFNLRS. Basic and acidic residues predominate over residues 108 to 117; sequence PTREPSEYRH. Composition is skewed to low complexity over residues 118-156, 203-230, and 240-251; these read PLSS…SLSS, SLQA…PLSA, and SSSSQPPARASQ. The span at 264–276 shows a compositional bias: basic and acidic residues; sequence SFRDRDSSVREKS. Polar residues predominate over residues 288–297; the sequence is EASNGISGSS. Basic and acidic residues predominate over residues 298–317; the sequence is PRKDRDRDRDHRGTTRESQR. Polar residues-rich tracts occupy residues 318–340 and 366–378; these read RSVS…SASN and VDNT…AAPS. Residues 411–420 show a composition bias toward low complexity; it reads SPRLSLRPPS. Polar residues-rich tracts occupy residues 433–442, 451–465, and 472–481; these read NPTNGTTSTA, SPPS…TNPS, and SFSNILSSSE. 2 stretches are compositionally biased toward basic and acidic residues: residues 500–519 and 529–540; these read VPMK…EKKE and RISDIRHSESTP. A coiled-coil region spans residues 666 to 735; that stretch reads ERELFAEKER…VQQTRLILQK (70 aa). Low complexity predominate over residues 689 to 707; sequence MATTMEAKAAALARASAAQ. A compositionally biased stretch (basic and acidic residues) spans 709 to 723; the sequence is EAERQKYMREAERAN. The span at 769 to 781 shows a compositional bias: basic residues; that stretch reads TKGKGRAGARPKK. Basic and acidic residues predominate over residues 782–793; sequence SKEQKQAEKDAA. Positions 794–806 are enriched in low complexity; the sequence is EAAQAALDAGLEL. Residues 824-858 show a composition bias toward basic and acidic residues; the sequence is APKEADVDKDKENKEPQEPKEPKEPKEKVIKEKVV. One can recognise a DBINO domain in the interval 881–1006; the sequence is IWRDLARKDV…SHFIGKKIKT (126 aa). Positions 1130-1302 constitute a Helicase ATP-binding domain; the sequence is VNLYEQGING…WALLHFIMPS (173 aa). 1143-1150 serves as a coordination point for ATP; the sequence is DEMGLGKT. Positions 1253 to 1256 match the DEAQ box motif; the sequence is DEAQ. Positions 1702–1858 constitute a Helicase C-terminal domain; it reads KLDELLRELK…GSSAAGGGVD (157 aa). Over residues 1891-1902 the composition is skewed to basic and acidic residues; it reads ELLESGELDKMQ. Residues 1891 to 1986 form a disordered region; the sequence is ELLESGELDK…GSKKAKTTKQ (96 aa). Positions 1903–1914 are enriched in basic residues; that stretch reads KKSRGGNKRKRG. Basic and acidic residues predominate over residues 1919-1933; that stretch reads EGKEVSLDEMYHEGE. Residues 1954–1967 are compositionally biased toward gly residues; that stretch reads AAGGEGGDGKGAVG. Residues 1970-1985 are compositionally biased toward basic residues; it reads AKKRKTGGSKKAKTTK.

Belongs to the SNF2/RAD54 helicase family. As to quaternary structure, component of the INO80 chromatin-remodeling complex.

It is found in the nucleus. The enzyme catalyses ATP + H2O = ADP + phosphate + H(+). ATPase component of the INO80 complex which remodels chromatin by shifting nucleosomes and is involved in DNA repair. The chain is Chromatin-remodeling ATPase INO80 (crf2-1) from Neurospora crassa (strain ATCC 24698 / 74-OR23-1A / CBS 708.71 / DSM 1257 / FGSC 987).